Consider the following 946-residue polypeptide: Zinc finger protein rotund (946 aa).

Disordered regions lie at residues 10–30 and 156–269; these read GPQLAHHPHSNPHNSSHGHSD and FRKP…HNLN. Over residues 161-176 the composition is skewed to polar residues; sequence NNNGYSWSTGNNNEVV. A compositionally biased stretch (low complexity) spans 177 to 188; it reads SHSSNGHTNNHP. 2 stretches are compositionally biased toward polar residues: residues 198 to 230 and 242 to 269; these read ASATQATSVSAINLNQAQPASQTRSNFGSSIKS and TCKSQENNSGQNPTPNSLSDHNPAHNLN. C2H2-type zinc fingers lie at residues 488 to 510, 517 to 539, 545 to 567, 573 to 597, 603 to 625, and 634 to 656; these read YQCKMCPQIFSSKADLQLHTQIH, YKCTQCSKAFANSSYLSQHTRIH, YRCEICQRKFTQLSHLQQHIRTH, YKCRHPGCQKAFSQLSNLQSHSRCH, FKCNSCYKCFSDEPSLLEHIPKH, and HICQYCGKSYTQETYLTKHMQKH. The interval 683–853 is disordered; sequence GGSANPANGP…TPSAVGPYDA (171 aa). Low complexity-rich tracts occupy residues 739-762 and 770-790; these read HQQQQQQQQQQQQQQQQQQQQQQQ and HGVPPQQHVPPQQQQQQQQQQ. The segment covering 813 to 822 has biased composition (polar residues); it reads TAPNGSQSNG. Positions 828–841 are enriched in basic and acidic residues; it reads QPHHRMPDPVREDI.

This sequence belongs to the krueppel C2H2-type zinc-finger protein family. In terms of assembly, interacts with nab; which acts as a corepressor. Isoform rn and isoform roe are expressed in non-overlapping domains in the larval imaginal disks. Isoform rn is first expressed during the early third larval instar in the leg, wing, haltere and antennal part of the eye-antennal imaginal disk. It is observed as a ring in the leg and antenna disks and in the presumptive wing pouch and capitellum of wing and haltere disks respectively. In wing disk it is expressed in 3 concentric domains in the wing pouch. In late third instar, expression of isoform rn in the leg disk is no longer evident, but is maintained in the other disks. Isoform roe appears in the third instar and is confined to the eye part of the eye-antennal imaginal disk in a band of 4-6 cells at the morphogenetic furrow. There is no evidence of roe expression in other imaginal disks.

The protein localises to the nucleus. Its function is as follows. Transcription factor involved in imaginal disks development. Isoform rn is required in the wings, antenna, haltere, proboscis and legs disks, while isoform roe is required in the eye disk. Together with nab corepressor, it is involved in the initiation and maintenance of wingless (wg) expression in the wing hinge, by limiting the expression of wg to this compartment. Also required for the epithelial-mesenchymal transition branch of basolateral junctions signaling. This Drosophila melanogaster (Fruit fly) protein is Zinc finger protein rotund.